The sequence spans 251 residues: Derlin-1 (251 aa).

Residue Ser2 is modified to N-acetylserine. The Cytoplasmic segment spans residues 2 to 15 (SDIGDWFRSIPAIT). A helical membrane pass occupies residues 16–31 (RYWFAATVAVPLVGKL). The Lumenal portion of the chain corresponds to 32–69 (GLISPAYLFLWPEAFLYRFQIWRPITATFYFPVGPGTG). Residues 70–89 (FLYLVNLYFLYHYSTRLETG) traverse the membrane as a helical segment. Residues 90–94 (AFDGR) are Cytoplasmic-facing. A helical transmembrane segment spans residues 95-115 (PADYLFMLLFNWICIVITGLA). Over 116-122 (MDMQLLM) the chain is Lumenal. A helical membrane pass occupies residues 123–137 (IPLIMSVLYVWAQLN). Residues 138-154 (RDMIVSFWFGTRFKACY) lie on the Cytoplasmic side of the membrane. A helical transmembrane segment spans residues 155 to 166 (LPWVILGFNYII). Over 167-170 (GGSV) the chain is Lumenal. A helical transmembrane segment spans residues 171-189 (INELIGNLVGHLYFFLMFR). At 190–251 (YPMDLGGRNF…WGQGFRLGDQ (62 aa)) the chain is on the cytoplasmic side. At Ser201 the chain carries Phosphoserine. Thr202 bears the Phosphothreonine mark. Ser226 bears the Phosphoserine mark. The tract at residues 229–251 (RAADQNGGGGRHNWGQGFRLGDQ) is disordered. Residues 241–248 (NWGQGFRL) carry the SHP-box motif.

This sequence belongs to the derlin family. Homotetramer. The four subunits of the tetramer are arranged in a twofold symmetry. Forms homo- and heterooligomers with DERL2 and DERL3; binding to DERL3 is poorer than that between DERL2 and DERL3. Interacts (via SHP-box motif) with VCP. Interacts with AMFR, SELENOS, SEL1L, SELENOK and SYVN1, as well as with SEL1L-SYVN1 and VCP-SELENOS protein complexes; this interaction is weaker than that observed between DERL2 and these complexes. Interacts with NGLY1 and YOD1. Does not bind to EDEM1. Interacts with DNAJB9. Interacts with RNF103. Interacts with HM13. Interacts with XBP1 isoform 1 (via luminal/ectodomain domain); the interaction obviates the need for ectodomain shedding prior HM13/SPP-mediated XBP1 isoform 1 cleavage. Interacts with the signal recognition particle/SRP and the SRP receptor; in the process of endoplasmic reticulum stress-induced pre-emptive quality control. May interact with UBXN6. Interacts with ZFAND2B; probably through VCP. Interacts with CCDC47. Interacts with C18orf32. May interact with TRAM1. Forms a complex with SVIP and VCP/p97.

It is found in the endoplasmic reticulum membrane. Its function is as follows. Functional component of endoplasmic reticulum-associated degradation (ERAD) for misfolded lumenal proteins. Forms homotetramers which encircle a large channel traversing the endoplasmic reticulum (ER) membrane. This allows the retrotranslocation of misfolded proteins from the ER into the cytosol where they are ubiquitinated and degraded by the proteasome. The channel has a lateral gate within the membrane which provides direct access to membrane proteins with no need to reenter the ER lumen first. May mediate the interaction between VCP and the misfolded protein. Also involved in endoplasmic reticulum stress-induced pre-emptive quality control, a mechanism that selectively attenuates the translocation of newly synthesized proteins into the endoplasmic reticulum and reroutes them to the cytosol for proteasomal degradation. By controlling the steady-state expression of the IGF1R receptor, indirectly regulates the insulin-like growth factor receptor signaling pathway. The sequence is that of Derlin-1 from Pongo abelii (Sumatran orangutan).